The chain runs to 194 residues: PRELI domain containing protein 3B (194 aa).

A PRELI/MSF1 domain is found at 1–172; the sequence is MKIWTSEHVF…VIHKLNAEIE (172 aa). Phosphoserine is present on residues Ser-46 and Ser-51.

The protein belongs to the slowmo family.

This is PRELI domain containing protein 3B (PRELID3B) from Sus scrofa (Pig).